The following is a 188-amino-acid chain: MTETHTTEVRGDSGRAVAERVASRVLDVPDFPKPGVMFKDLMPLFADGDTFREVIDGIVRHYGRDSFDAVVGIEARGFVVAAAIAYAAGVGVVPVRKAGKLPRVAYSASYALEYGEATLEVHQDAFTAGHRVLVVDDVLATGGTAQATLDLVERAGGTVAGFTVLLELGFLGGRERLAPRAVHALLTV.

It belongs to the purine/pyrimidine phosphoribosyltransferase family. In terms of assembly, homodimer.

It is found in the cytoplasm. It catalyses the reaction AMP + diphosphate = 5-phospho-alpha-D-ribose 1-diphosphate + adenine. The protein operates within purine metabolism; AMP biosynthesis via salvage pathway; AMP from adenine: step 1/1. Catalyzes a salvage reaction resulting in the formation of AMP, that is energically less costly than de novo synthesis. The chain is Adenine phosphoribosyltransferase from Salinispora arenicola (strain CNS-205).